The sequence spans 78 residues: D-alanyl carrier protein (78 aa).

A Carrier domain is found at 1–78; the sequence is MAFRENVLEI…MIITQLEALK (78 aa). Serine 36 bears the O-(pantetheine 4'-phosphoryl)serine mark.

The protein belongs to the DltC family. In terms of processing, 4'-phosphopantetheine is transferred from CoA to a specific serine of apo-DCP.

The protein localises to the cytoplasm. Its pathway is cell wall biogenesis; lipoteichoic acid biosynthesis. Its function is as follows. Carrier protein involved in the D-alanylation of lipoteichoic acid (LTA). The loading of thioester-linked D-alanine onto DltC is catalyzed by D-alanine--D-alanyl carrier protein ligase DltA. The DltC-carried D-alanyl group is further transferred to cell membrane phosphatidylglycerol (PG) by forming an ester bond, probably catalyzed by DltD. D-alanylation of LTA plays an important role in modulating the properties of the cell wall in Gram-positive bacteria, influencing the net charge of the cell wall. In Listeria monocytogenes serotype 4b (strain CLIP80459), this protein is D-alanyl carrier protein.